The primary structure comprises 308 residues: Protoheme IX farnesyltransferase (308 aa).

The next 8 helical transmembrane spans lie at 31 to 51 (VIEL…RGTV), 53 to 73 (PLLI…ANTL), 102 to 122 (HALI…WLST), 124 to 144 (LLSG…YTML), 149 to 169 (TSQN…IGWS), 170 to 190 (AVTG…FFWT), 242 to 262 (LATG…FLVM), and 288 to 308 (YLAV…PTLL).

It belongs to the UbiA prenyltransferase family. Protoheme IX farnesyltransferase subfamily.

It is found in the cell membrane. The catalysed reaction is heme b + (2E,6E)-farnesyl diphosphate + H2O = Fe(II)-heme o + diphosphate. The protein operates within porphyrin-containing compound metabolism; heme O biosynthesis; heme O from protoheme: step 1/1. In terms of biological role, converts heme B (protoheme IX) to heme O by substitution of the vinyl group on carbon 2 of heme B porphyrin ring with a hydroxyethyl farnesyl side group. The sequence is that of Protoheme IX farnesyltransferase from Mycolicibacterium smegmatis (strain ATCC 700084 / mc(2)155) (Mycobacterium smegmatis).